Consider the following 89-residue polypeptide: Small ribosomal subunit protein uS15 (89 aa).

The protein belongs to the universal ribosomal protein uS15 family. Part of the 30S ribosomal subunit. Forms a bridge to the 50S subunit in the 70S ribosome, contacting the 23S rRNA.

Its function is as follows. One of the primary rRNA binding proteins, it binds directly to 16S rRNA where it helps nucleate assembly of the platform of the 30S subunit by binding and bridging several RNA helices of the 16S rRNA. Functionally, forms an intersubunit bridge (bridge B4) with the 23S rRNA of the 50S subunit in the ribosome. The polypeptide is Small ribosomal subunit protein uS15 (Marinobacter nauticus (strain ATCC 700491 / DSM 11845 / VT8) (Marinobacter aquaeolei)).